The chain runs to 159 residues: Protein-export protein SecB (159 aa).

It belongs to the SecB family. As to quaternary structure, homotetramer, a dimer of dimers. One homotetramer interacts with 1 SecA dimer.

It localises to the cytoplasm. Functionally, one of the proteins required for the normal export of preproteins out of the cell cytoplasm. It is a molecular chaperone that binds to a subset of precursor proteins, maintaining them in a translocation-competent state. It also specifically binds to its receptor SecA. The sequence is that of Protein-export protein SecB from Rhizobium etli (strain CIAT 652).